The following is a 281-amino-acid chain: DegV domain-containing protein CA_C0948 (281 aa).

Positions 4 to 280 (IAIITDTTAD…PGLVGLVLLE (277 aa)) constitute a DegV domain. Residues S60 and S93 each contribute to the hexadecanoate site.

Its function is as follows. May bind long-chain fatty acids, such as palmitate, and may play a role in lipid transport or fatty acid metabolism. The polypeptide is DegV domain-containing protein CA_C0948 (Clostridium acetobutylicum (strain ATCC 824 / DSM 792 / JCM 1419 / IAM 19013 / LMG 5710 / NBRC 13948 / NRRL B-527 / VKM B-1787 / 2291 / W)).